The chain runs to 386 residues: 4-hydroxy-3-methylbut-2-en-1-yl diphosphate synthase (flavodoxin) (386 aa).

Residues Cys-281, Cys-284, Cys-316, and Glu-323 each coordinate [4Fe-4S] cluster.

This sequence belongs to the IspG family. The cofactor is [4Fe-4S] cluster.

It catalyses the reaction (2E)-4-hydroxy-3-methylbut-2-enyl diphosphate + oxidized [flavodoxin] + H2O + 2 H(+) = 2-C-methyl-D-erythritol 2,4-cyclic diphosphate + reduced [flavodoxin]. It functions in the pathway isoprenoid biosynthesis; isopentenyl diphosphate biosynthesis via DXP pathway; isopentenyl diphosphate from 1-deoxy-D-xylulose 5-phosphate: step 5/6. Converts 2C-methyl-D-erythritol 2,4-cyclodiphosphate (ME-2,4cPP) into 1-hydroxy-2-methyl-2-(E)-butenyl 4-diphosphate. The polypeptide is 4-hydroxy-3-methylbut-2-en-1-yl diphosphate synthase (flavodoxin) (Corynebacterium jeikeium (strain K411)).